The sequence spans 406 residues: Arginine biosynthesis bifunctional protein ArgJ (406 aa).

Residues threonine 152, lysine 179, threonine 190, glutamate 277, asparagine 401, and serine 406 each coordinate substrate. The active-site Nucleophile is the threonine 190.

The protein belongs to the ArgJ family. As to quaternary structure, heterotetramer of two alpha and two beta chains.

It is found in the cytoplasm. The catalysed reaction is N(2)-acetyl-L-ornithine + L-glutamate = N-acetyl-L-glutamate + L-ornithine. It carries out the reaction L-glutamate + acetyl-CoA = N-acetyl-L-glutamate + CoA + H(+). Its pathway is amino-acid biosynthesis; L-arginine biosynthesis; L-ornithine and N-acetyl-L-glutamate from L-glutamate and N(2)-acetyl-L-ornithine (cyclic): step 1/1. The protein operates within amino-acid biosynthesis; L-arginine biosynthesis; N(2)-acetyl-L-ornithine from L-glutamate: step 1/4. Catalyzes two activities which are involved in the cyclic version of arginine biosynthesis: the synthesis of N-acetylglutamate from glutamate and acetyl-CoA as the acetyl donor, and of ornithine by transacetylation between N(2)-acetylornithine and glutamate. The sequence is that of Arginine biosynthesis bifunctional protein ArgJ from Neisseria gonorrhoeae (strain ATCC 700825 / FA 1090).